A 443-amino-acid chain; its full sequence is Ribulose bisphosphate carboxylase large chain (443 aa).

Substrate contacts are provided by asparagine 89 and threonine 139. Lysine 141 acts as the Proton acceptor in catalysis. Lysine 143 serves as a coordination point for substrate. 3 residues coordinate Mg(2+): lysine 167, aspartate 169, and glutamate 170. Lysine 167 bears the N6-carboxylysine mark. Histidine 260 serves as the catalytic Proton acceptor. Residues arginine 261, histidine 293, and serine 345 each contribute to the substrate site.

It belongs to the RuBisCO large chain family. Type I subfamily. Heterohexadecamer of 8 large chains and 8 small chains; disulfide-linked. The disulfide link is formed within the large subunit homodimers. Mg(2+) is required as a cofactor. The disulfide bond which can form in the large chain dimeric partners within the hexadecamer appears to be associated with oxidative stress and protein turnover.

Its subcellular location is the plastid. It is found in the chloroplast. The enzyme catalyses 2 (2R)-3-phosphoglycerate + 2 H(+) = D-ribulose 1,5-bisphosphate + CO2 + H2O. It carries out the reaction D-ribulose 1,5-bisphosphate + O2 = 2-phosphoglycolate + (2R)-3-phosphoglycerate + 2 H(+). Its function is as follows. RuBisCO catalyzes two reactions: the carboxylation of D-ribulose 1,5-bisphosphate, the primary event in carbon dioxide fixation, as well as the oxidative fragmentation of the pentose substrate in the photorespiration process. Both reactions occur simultaneously and in competition at the same active site. The sequence is that of Ribulose bisphosphate carboxylase large chain from Antirrhinum majus (Garden snapdragon).